The chain runs to 127 residues: Fluoride-specific ion channel FluC (127 aa).

The next 4 helical transmembrane spans lie at Leu6–Phe26, Thr37–Ala57, Leu67–Val87, and Leu96–Leu116. Na(+) is bound by residues Gly75 and Thr78.

This sequence belongs to the fluoride channel Fluc/FEX (TC 1.A.43) family.

It is found in the cell inner membrane. The enzyme catalyses fluoride(in) = fluoride(out). Na(+) is not transported, but it plays an essential structural role and its presence is essential for fluoride channel function. In terms of biological role, fluoride-specific ion channel. Important for reducing fluoride concentration in the cell, thus reducing its toxicity. The polypeptide is Fluoride-specific ion channel FluC (Tolumonas auensis (strain DSM 9187 / NBRC 110442 / TA 4)).